The chain runs to 101 residues: Small ribosomal subunit protein uS14 (101 aa).

Positions 53–72 (RDAAAVRVRNRDSHDGRPRG) are disordered. The span at 61-70 (RNRDSHDGRP) shows a compositional bias: basic and acidic residues.

The protein belongs to the universal ribosomal protein uS14 family. In terms of assembly, part of the 30S ribosomal subunit. Contacts proteins S3 and S10.

Functionally, binds 16S rRNA, required for the assembly of 30S particles and may also be responsible for determining the conformation of the 16S rRNA at the A site. This is Small ribosomal subunit protein uS14 from Corynebacterium glutamicum (strain ATCC 13032 / DSM 20300 / JCM 1318 / BCRC 11384 / CCUG 27702 / LMG 3730 / NBRC 12168 / NCIMB 10025 / NRRL B-2784 / 534).